The primary structure comprises 89 residues: Small ribosomal subunit protein uS15 (89 aa).

The protein belongs to the universal ribosomal protein uS15 family. In terms of assembly, part of the 30S ribosomal subunit. Forms a bridge to the 50S subunit in the 70S ribosome, contacting the 23S rRNA.

In terms of biological role, one of the primary rRNA binding proteins, it binds directly to 16S rRNA where it helps nucleate assembly of the platform of the 30S subunit by binding and bridging several RNA helices of the 16S rRNA. Its function is as follows. Forms an intersubunit bridge (bridge B4) with the 23S rRNA of the 50S subunit in the ribosome. The protein is Small ribosomal subunit protein uS15 of Lactobacillus helveticus (strain DPC 4571).